Consider the following 255-residue polypeptide: Malonyl-[acyl-carrier protein] O-methyltransferase (255 aa).

The protein belongs to the methyltransferase superfamily.

It catalyses the reaction malonyl-[ACP] + S-adenosyl-L-methionine = malonyl-[ACP] methyl ester + S-adenosyl-L-homocysteine. It functions in the pathway cofactor biosynthesis; biotin biosynthesis. Converts the free carboxyl group of a malonyl-thioester to its methyl ester by transfer of a methyl group from S-adenosyl-L-methionine (SAM). It allows to synthesize pimeloyl-ACP via the fatty acid synthetic pathway. This chain is Malonyl-[acyl-carrier protein] O-methyltransferase, found in Porphyromonas gingivalis (strain ATCC BAA-308 / W83).